A 435-amino-acid chain; its full sequence is 3-phosphoshikimate 1-carboxyvinyltransferase (435 aa).

Positions 23, 24, and 28 each coordinate 3-phosphoshikimate. Lys-23 serves as a coordination point for phosphoenolpyruvate. Positions 96 and 124 each coordinate phosphoenolpyruvate. 6 residues coordinate 3-phosphoshikimate: Ser-167, Ser-168, Gln-169, Ser-196, Glu-311, and His-340. Gln-169 contacts phosphoenolpyruvate. Glu-311 (proton acceptor) is an active-site residue. Residues Arg-344, Arg-385, and Lys-410 each coordinate phosphoenolpyruvate.

This sequence belongs to the EPSP synthase family. Monomer.

Its subcellular location is the cytoplasm. It catalyses the reaction 3-phosphoshikimate + phosphoenolpyruvate = 5-O-(1-carboxyvinyl)-3-phosphoshikimate + phosphate. Its pathway is metabolic intermediate biosynthesis; chorismate biosynthesis; chorismate from D-erythrose 4-phosphate and phosphoenolpyruvate: step 6/7. Functionally, catalyzes the transfer of the enolpyruvyl moiety of phosphoenolpyruvate (PEP) to the 5-hydroxyl of shikimate-3-phosphate (S3P) to produce enolpyruvyl shikimate-3-phosphate and inorganic phosphate. The sequence is that of 3-phosphoshikimate 1-carboxyvinyltransferase from Mycolicibacterium paratuberculosis (strain ATCC BAA-968 / K-10) (Mycobacterium paratuberculosis).